Consider the following 257-residue polypeptide: Imidazole glycerol phosphate synthase subunit HisF (257 aa).

Catalysis depends on residues Asp-12 and Asp-131.

Belongs to the HisA/HisF family. As to quaternary structure, heterodimer of HisH and HisF.

The protein localises to the cytoplasm. It catalyses the reaction 5-[(5-phospho-1-deoxy-D-ribulos-1-ylimino)methylamino]-1-(5-phospho-beta-D-ribosyl)imidazole-4-carboxamide + L-glutamine = D-erythro-1-(imidazol-4-yl)glycerol 3-phosphate + 5-amino-1-(5-phospho-beta-D-ribosyl)imidazole-4-carboxamide + L-glutamate + H(+). It participates in amino-acid biosynthesis; L-histidine biosynthesis; L-histidine from 5-phospho-alpha-D-ribose 1-diphosphate: step 5/9. In terms of biological role, IGPS catalyzes the conversion of PRFAR and glutamine to IGP, AICAR and glutamate. The HisF subunit catalyzes the cyclization activity that produces IGP and AICAR from PRFAR using the ammonia provided by the HisH subunit. This chain is Imidazole glycerol phosphate synthase subunit HisF, found in Kineococcus radiotolerans (strain ATCC BAA-149 / DSM 14245 / SRS30216).